The sequence spans 31 residues: Cyclopsychotride-A (31 aa).

The cyclopeptide (Ser-Asn) cross-link spans 1–31; the sequence is SIPCGESCVFIPCTVTALLGCSCKSKVCYKN. Disulfide bonds link Cys4-Cys21, Cys8-Cys23, and Cys13-Cys28.

This sequence belongs to the cyclotide family. Bracelet subfamily. In terms of processing, this is a cyclic peptide.

Functionally, probably participates in a plant defense mechanism. Has antibiotic activity. Inhibits the cytopathic effects and replication of the human immunodeficiency virus. Active against both Gram-positive and Gram-negative bacteria. The polypeptide is Cyclopsychotride-A (Psychotria longipes).